Reading from the N-terminus, the 290-residue chain is Eukaryotic translation initiation factor 3 subunit G (290 aa).

Positions methionine 1–glycine 34 are disordered. An RRM domain is found at alanine 210–arginine 288.

The protein belongs to the eIF-3 subunit G family. As to quaternary structure, component of the eukaryotic translation initiation factor 3 (eIF-3) complex.

It localises to the cytoplasm. In terms of biological role, RNA-binding component of the eukaryotic translation initiation factor 3 (eIF-3) complex, which is involved in protein synthesis of a specialized repertoire of mRNAs and, together with other initiation factors, stimulates binding of mRNA and methionyl-tRNAi to the 40S ribosome. The eIF-3 complex specifically targets and initiates translation of a subset of mRNAs involved in cell proliferation. This subunit can bind 18S rRNA. The chain is Eukaryotic translation initiation factor 3 subunit G (tif35) from Aspergillus fumigatus (strain CBS 144.89 / FGSC A1163 / CEA10) (Neosartorya fumigata).